The sequence spans 108 residues: UPF0060 membrane protein KPN78578_15550 (108 aa).

4 helical membrane passes run 6-26, 29-49, 61-81, and 86-106; these read LLFFATALCEIVGCYLPWLWL, GATPLLLIPTALALALFVWLL, AAYGGVYVCTALLWLRVVDGV, and YDWAGAAIALCGMLIIVAGWG.

Belongs to the UPF0060 family.

Its subcellular location is the cell inner membrane. This is UPF0060 membrane protein KPN78578_15550 from Klebsiella pneumoniae subsp. pneumoniae (strain ATCC 700721 / MGH 78578).